The primary structure comprises 494 residues: UPF0371 protein SPy_1343/M5005_Spy1095 (494 aa).

Belongs to the UPF0371 family.

This chain is UPF0371 protein SPy_1343/M5005_Spy1095, found in Streptococcus pyogenes serotype M1.